The primary structure comprises 292 residues: Tetrahydromethanopterin:alpha-L-glutamate ligase (292 aa).

The region spanning S103–L286 is the ATP-grasp domain. ATP-binding positions include K138, Q176–D188, and R204. Residues D247, E259, and N261 each coordinate Mg(2+). Residues D247, E259, and N261 each contribute to the Mn(2+) site.

Belongs to the RimK family. MptN subfamily. Homodimer. Mg(2+) is required as a cofactor. The cofactor is Mn(2+).

The catalysed reaction is 5,6,7,8-tetrahydromethanopterin + L-glutamate + ATP = 5,6,7,8-tetrahydrosarcinapterin + ADP + phosphate + H(+). It functions in the pathway cofactor biosynthesis; 5,6,7,8-tetrahydrosarcinapterin biosynthesis. Its function is as follows. Catalyzes the ATP or GTP-dependent addition of one L-glutamate molecule to tetrahydromethanopterin, producing tetrahydrosarcinapterin. This Methanococcus maripaludis (strain DSM 14266 / JCM 13030 / NBRC 101832 / S2 / LL) protein is Tetrahydromethanopterin:alpha-L-glutamate ligase (mptN).